A 407-amino-acid chain; its full sequence is Serine/threonine transporter SstT (407 aa).

The next 9 membrane-spanning stretches (helical) occupy residues 12–32 (GNLIVQICIGIVLGILIGISS), 42–62 (LGILFTSALKAIAPMLVFILI), 81–101 (IIILYIVGTFLASACAVLANF), 141–161 (ALSSGNYLGILTWAIAGGIAL), 179–199 (VLKIVKFIVKLAPFGIFGLVA), 218–238 (ILLVATMLFVTFVINALIVFF), 245–267 (FPLIFICLRHSAFFAFFTRSSAA), 288–308 (ISIPLGATINMAGAAVTIAIL), and 330–350 (IIATFAACGASGVAGGSLLLI).

The protein belongs to the dicarboxylate/amino acid:cation symporter (DAACS) (TC 2.A.23) family.

It is found in the cell inner membrane. It catalyses the reaction L-serine(in) + Na(+)(in) = L-serine(out) + Na(+)(out). The enzyme catalyses L-threonine(in) + Na(+)(in) = L-threonine(out) + Na(+)(out). In terms of biological role, involved in the import of serine and threonine into the cell, with the concomitant import of sodium (symport system). The chain is Serine/threonine transporter SstT from Campylobacter jejuni subsp. jejuni serotype O:23/36 (strain 81-176).